Consider the following 31-residue polypeptide: uncharacterized protein (31 aa).

This is an uncharacterized protein from Caenorhabditis elegans.